The primary structure comprises 203 residues: Recombination protein RecR (203 aa).

Residues 56–71 (CSVCGNVSDEERCRIC) form a C4-type zinc finger. Residues 79 to 179 (SLVCVVEEPK…TVTRIASGLP (101 aa)) form the Toprim domain.

It belongs to the RecR family.

In terms of biological role, may play a role in DNA repair. It seems to be involved in an RecBC-independent recombinational process of DNA repair. It may act with RecF and RecO. This Mycolicibacterium smegmatis (strain ATCC 700084 / mc(2)155) (Mycobacterium smegmatis) protein is Recombination protein RecR.